The following is a 259-amino-acid chain: Flagellar L-ring protein (259 aa).

An N-terminal signal peptide occupies residues 1–15 (MKRISLIALVTLMSG). A lipid anchor (N-palmitoyl cysteine) is attached at Cys16. A lipid anchor (S-diacylglycerol cysteine) is attached at Cys16.

The protein belongs to the FlgH family. As to quaternary structure, the basal body constitutes a major portion of the flagellar organelle and consists of four rings (L,P,S, and M) mounted on a central rod.

Its subcellular location is the cell outer membrane. The protein resides in the bacterial flagellum basal body. In terms of biological role, assembles around the rod to form the L-ring and probably protects the motor/basal body from shearing forces during rotation. The protein is Flagellar L-ring protein of Vibrio vulnificus (strain YJ016).